The sequence spans 322 residues: Sideroflexin-1 (322 aa).

At S2 the chain carries N-acetylserine. Residues 2-102 (SGELPPNINI…MSAQVPMNMT (101 aa)) lie on the Mitochondrial matrix side of the membrane. The chain crosses the membrane as a helical span at residues 103-120 (ITGCMMTFYRTTPAVLFW). Residues 121-146 (QWINQSFNAVVNYTNRSGDAPLTVNE) are Mitochondrial intermembrane-facing. The helical transmembrane segment at 147–167 (LGTAYVSATTGAVATALGLNA) threads the bilayer. Residues 168-174 (LTKHVSP) lie on the Mitochondrial matrix side of the membrane. The helical transmembrane segment at 175–195 (LIGRFVPFAAVAAANCINIPL) threads the bilayer. The Mitochondrial intermembrane portion of the chain corresponds to 196–228 (MRQRELKVGIPVTDENGNRLGESANAAKQAITQ). The chain crosses the membrane as a helical span at residues 229–249 (VVVSRILMAAPGMAIPPFIMN). Residues 250-266 (TLEKKAFLKRFPWMSAP) are Mitochondrial matrix-facing. Residues 267–287 (IQVGLVGFCLVFATPLCCALF) traverse the membrane as a helical segment. At 288–322 (PQKSSMSVTSLEAELQAKIQESHPELRRVYFNKGL) the chain is on the mitochondrial intermembrane side.

The protein belongs to the sideroflexin family. In terms of tissue distribution, highly expressed in tissues with high one-carbon metabolism activity, such as blood, liver and kidney.

The protein localises to the mitochondrion inner membrane. The catalysed reaction is L-serine(in) = L-serine(out). The enzyme catalyses L-alanine(in) = L-alanine(out). It carries out the reaction L-cysteine(in) = L-cysteine(out). Amino acid transporter importing serine, an essential substrate of the mitochondrial branch of the one-carbon pathway, into mitochondria. Mitochondrial serine is then converted to glycine and formate, which exits to the cytosol where it is used to generate the charged folates that serve as one-carbon donors. May also transport other amino acids including alanine and cysteine. The protein is Sideroflexin-1 of Homo sapiens (Human).